The primary structure comprises 188 residues: UPF0398 protein SE_1135 (188 aa).

The protein belongs to the UPF0398 family.

This is UPF0398 protein SE_1135 from Staphylococcus epidermidis (strain ATCC 12228 / FDA PCI 1200).